The sequence spans 264 residues: MRLIDSTAKISPLAVIEDGAQIGAHVEIGPFCVIGKNVKIDAKTILHSHVVINGHTEIGEQNQIFQFASIGEINQDLKYQGEPTKVVIGDRNSIRESVTIHRGTVQGGGVTRIGNDNLFMINAHIAHDCNISNHCIIANNGTLAGHVRLDDFVIVGGMSAIHQFVIIGSHVMLGGGSMVSQDVPPYVMAQGNHAQPFGVNLEGLKRRGFDKPTMHAIRHVYKLIYRSGKTIEEVLPEIEHIALNEPAIKVYLDFFKHSTRGIIR.

It belongs to the transferase hexapeptide repeat family. LpxA subfamily. In terms of assembly, homotrimer.

It localises to the cytoplasm. The catalysed reaction is a (3R)-hydroxyacyl-[ACP] + UDP-N-acetyl-alpha-D-glucosamine = a UDP-3-O-[(3R)-3-hydroxyacyl]-N-acetyl-alpha-D-glucosamine + holo-[ACP]. The protein operates within glycolipid biosynthesis; lipid IV(A) biosynthesis; lipid IV(A) from (3R)-3-hydroxytetradecanoyl-[acyl-carrier-protein] and UDP-N-acetyl-alpha-D-glucosamine: step 1/6. Involved in the biosynthesis of lipid A, a phosphorylated glycolipid that anchors the lipopolysaccharide to the outer membrane of the cell. The polypeptide is Acyl-[acyl-carrier-protein]--UDP-N-acetylglucosamine O-acyltransferase (Haemophilus ducreyi (strain 35000HP / ATCC 700724)).